A 124-amino-acid polypeptide reads, in one-letter code: Large ribosomal subunit protein bL12 (124 aa).

Belongs to the bacterial ribosomal protein bL12 family. In terms of assembly, homodimer. Part of the ribosomal stalk of the 50S ribosomal subunit. Forms a multimeric L10(L12)X complex, where L10 forms an elongated spine to which 2 to 4 L12 dimers bind in a sequential fashion. Binds GTP-bound translation factors.

Functionally, forms part of the ribosomal stalk which helps the ribosome interact with GTP-bound translation factors. Is thus essential for accurate translation. The polypeptide is Large ribosomal subunit protein bL12 (Phocaeicola vulgatus (strain ATCC 8482 / DSM 1447 / JCM 5826 / CCUG 4940 / NBRC 14291 / NCTC 11154) (Bacteroides vulgatus)).